We begin with the raw amino-acid sequence, 312 residues long: Pyrimidine-specific ribonucleoside hydrolase RihA (312 aa).

The active site involves H240.

Belongs to the IUNH family. RihA subfamily.

Its function is as follows. Hydrolyzes cytidine or uridine to ribose and cytosine or uracil, respectively. This Citrobacter koseri (strain ATCC BAA-895 / CDC 4225-83 / SGSC4696) protein is Pyrimidine-specific ribonucleoside hydrolase RihA.